The sequence spans 130 residues: Probable 4-amino-4-deoxy-L-arabinose-phosphoundecaprenol flippase subunit ArnF (130 aa).

Over 1-4 (MRGY) the chain is Cytoplasmic. A helical membrane pass occupies residues 5-25 (AWGAASVLLVTLAQLLMKWGM). Residues 26 to 47 (AQIPLMSFADVTLNLFMQYWLP) lie on the Periplasmic side of the membrane. A helical transmembrane segment spans residues 48 to 68 (LVVVSGGIFGYALSMLCWFFA). The Cytoplasmic segment spans residues 69 to 77 (LHHLPLNRA). A helical membrane pass occupies residues 78–98 (YPLLSVSYALVYLAAVILPWF). Position 99 (Asn99) is a topological domain, periplasmic. A helical membrane pass occupies residues 100-120 (ESATLLKTLGTLFILFGVWLI). At 121-130 (NSQAKVKTPQ) the chain is on the cytoplasmic side.

The protein belongs to the ArnF family. As to quaternary structure, heterodimer of ArnE and ArnF.

It is found in the cell inner membrane. It participates in bacterial outer membrane biogenesis; lipopolysaccharide biosynthesis. Functionally, translocates 4-amino-4-deoxy-L-arabinose-phosphoundecaprenol (alpha-L-Ara4N-phosphoundecaprenol) from the cytoplasmic to the periplasmic side of the inner membrane. In Serratia proteamaculans (strain 568), this protein is Probable 4-amino-4-deoxy-L-arabinose-phosphoundecaprenol flippase subunit ArnF.